A 71-amino-acid polypeptide reads, in one-letter code: Exodeoxyribonuclease 7 small subunit (71 aa).

This sequence belongs to the XseB family. Heterooligomer composed of large and small subunits.

Its subcellular location is the cytoplasm. It carries out the reaction Exonucleolytic cleavage in either 5'- to 3'- or 3'- to 5'-direction to yield nucleoside 5'-phosphates.. Functionally, bidirectionally degrades single-stranded DNA into large acid-insoluble oligonucleotides, which are then degraded further into small acid-soluble oligonucleotides. In Streptococcus thermophilus (strain ATCC BAA-250 / LMG 18311), this protein is Exodeoxyribonuclease 7 small subunit.